The primary structure comprises 697 residues: Protein FAM13A (697 aa).

3 disordered regions span residues 1–21 (MACE…MSPF), 52–112 (HLFD…GFSN), and 133–229 (YIGE…QQES). Position 19 is a phosphoserine (S19). The segment covering 58 to 78 (SSGGQSSEDSESGASSSSSTS) has biased composition (low complexity). The segment covering 86–103 (AKEQDESRHSRDVGRLNK) has biased composition (basic and acidic residues). Positions 146–169 (SSRLSELNENQDGLVNMENLNPTP) are enriched in polar residues. The segment covering 170–197 (SHERTGSDHVELISDGSKENEKDGRQSQ) has biased composition (basic and acidic residues). S271 and S291 each carry phosphoserine. Disordered stretches follow at residues 307–338 (TEMP…EDLT) and 398–433 (LKIS…KKQE). A compositionally biased stretch (basic and acidic residues) spans 398–407 (LKISEEDLPP). The residue at position 401 (S401) is a Phosphoserine. Over residues 412–422 (RSNTLPKSFGS) the composition is skewed to polar residues. The segment covering 424–433 (LEKEDEKKQE) has biased composition (basic and acidic residues).

Belongs to the FAM13 family.

The protein is Protein FAM13A (FAM13A) of Bos taurus (Bovine).